A 310-amino-acid polypeptide reads, in one-letter code: p-hydroxybenzoic acid efflux pump subunit AaeA (310 aa).

A helical transmembrane segment spans residues 12-32 (AITVVLVILAFIAIFNAWVYY).

Belongs to the membrane fusion protein (MFP) (TC 8.A.1) family.

The protein resides in the cell inner membrane. Forms an efflux pump with AaeB. The chain is p-hydroxybenzoic acid efflux pump subunit AaeA from Escherichia coli O7:K1 (strain IAI39 / ExPEC).